We begin with the raw amino-acid sequence, 243 residues long: Probable glycerol uptake facilitator protein (243 aa).

Helical transmembrane passes span 7-27 and 44-64; these read ILLG…GVCA and LLIA…SIQV. An NPA 1 motif is present at residues 72–74; sequence NPA. Transmembrane regions (helical) follow at residues 88-108, 143-163, and 166-186; these read IGLL…AQII, ISYE…GDYH, and TGVF…GCAI. Positions 187–189 match the NPA 2 motif; that stretch reads NPA. A helical transmembrane segment spans residues 221-241; that stretch reads LVPLLAPIAAGLIMGGFSLLI.

Belongs to the MIP/aquaporin (TC 1.A.8) family.

The protein localises to the cell membrane. The enzyme catalyses glycerol(in) = glycerol(out). Mediates glycerol diffusion across the cytoplasmic membrane via a pore-type mechanism. The sequence is that of Probable glycerol uptake facilitator protein (glpF) from Mycoplasmoides gallisepticum (strain R(low / passage 15 / clone 2)) (Mycoplasma gallisepticum).